The sequence spans 1022 residues: Probable beta-galactosidase B (1022 aa).

An N-terminal signal peptide occupies residues 1-20 (MARFPQLLFLLLASIGLLSA). Asparagine 23 is a glycosylation site (N-linked (GlcNAc...) asparagine). Tyrosine 90 contacts substrate. A glycan (N-linked (GlcNAc...) asparagine) is linked at asparagine 100. Positions 135, 136, 137, and 195 each coordinate substrate. The active-site Proton donor is the glutamate 196. N-linked (GlcNAc...) asparagine glycosylation is present at asparagine 211. Tyrosine 265 is a substrate binding site. A disulfide bridge connects residues cysteine 271 and cysteine 324. Glutamate 308 serves as the catalytic Nucleophile. Tyrosine 373 provides a ligand contact to substrate. 10 N-linked (GlcNAc...) asparagine glycosylation sites follow: asparagine 411, asparagine 456, asparagine 541, asparagine 554, asparagine 626, asparagine 777, asparagine 790, asparagine 832, asparagine 880, and asparagine 881.

The protein belongs to the glycosyl hydrolase 35 family.

The protein localises to the secreted. The enzyme catalyses Hydrolysis of terminal non-reducing beta-D-galactose residues in beta-D-galactosides.. In terms of biological role, cleaves beta-linked terminal galactosyl residues from gangliosides, glycoproteins, and glycosaminoglycans. This chain is Probable beta-galactosidase B (lacB), found in Aspergillus terreus (strain NIH 2624 / FGSC A1156).